The chain runs to 316 residues: 1-phosphofructokinase (316 aa).

ATP-binding positions include 225-230 (SMGAGG) and 256-257 (GD). Aspartate 257 functions as the Proton acceptor in the catalytic mechanism.

This sequence belongs to the carbohydrate kinase PfkB family.

The enzyme catalyses beta-D-fructose 1-phosphate + ATP = beta-D-fructose 1,6-bisphosphate + ADP + H(+). In terms of biological role, catalyzes the ATP-dependent phosphorylation of fructose-l-phosphate to fructose-l,6-bisphosphate. The polypeptide is 1-phosphofructokinase (Rhodobacter capsulatus (Rhodopseudomonas capsulata)).